Reading from the N-terminus, the 316-residue chain is Annexin A13 (316 aa).

Gly-2 carries the N-myristoyl glycine lipid modification. Annexin repeat units follow at residues 14–85 (FDVD…ALLD), 86–157 (RPSE…SLLQ), 169–241 (DLAG…TLVR), and 245–316 (DQEG…ALLH).

Belongs to the annexin family. As to quaternary structure, monomer and homodimer. Detected in intestine, and at much lower levels also in kidney (at protein level).

Its subcellular location is the apical cell membrane. The protein resides in the cell membrane. It localises to the cytoplasmic vesicle. Binds to membranes enriched in phosphatidylserine or phosphatidylglycerol in a calcium-dependent manner. Half-maximal membrane binding requires about 60 uM calcium. Does not bind to membranes that lack phospholipids with an acidic headgroup. In terms of biological role, binds to membranes enriched in phosphatidylserine or phosphatidylglycerol in a calcium-dependent manner, but requires higher calcium levels for membrane binding than isoform A. Half-maximal membrane binding requires about 320 uM calcium. May play a role in vesicular traffic to the apical plasma membrane. This chain is Annexin A13 (ANXA13), found in Canis lupus familiaris (Dog).